Reading from the N-terminus, the 261-residue chain is Glucosamine-6-phosphate deaminase (261 aa).

Aspartate 67 (proton acceptor; for enolization step) is an active-site residue. Aspartate 136 serves as the catalytic For ring-opening step. Histidine 138 functions as the Proton acceptor; for ring-opening step in the catalytic mechanism. The For ring-opening step role is filled by glutamate 143.

The protein belongs to the glucosamine/galactosamine-6-phosphate isomerase family. NagB subfamily.

It carries out the reaction alpha-D-glucosamine 6-phosphate + H2O = beta-D-fructose 6-phosphate + NH4(+). Its pathway is amino-sugar metabolism; N-acetylneuraminate degradation; D-fructose 6-phosphate from N-acetylneuraminate: step 5/5. Catalyzes the reversible isomerization-deamination of glucosamine 6-phosphate (GlcN6P) to form fructose 6-phosphate (Fru6P) and ammonium ion. The polypeptide is Glucosamine-6-phosphate deaminase (Mycolicibacterium smegmatis (strain ATCC 700084 / mc(2)155) (Mycobacterium smegmatis)).